Reading from the N-terminus, the 366-residue chain is Class I histocompatibility antigen, Gogo-C*0201 alpha chain (366 aa).

An N-terminal signal peptide occupies residues Met1 to Ala24. The alpha-1 stretch occupies residues Gly25–Asp114. Residues Gly25–Ile308 are Extracellular-facing. A glycan (N-linked (GlcNAc...) asparagine) is linked at Asn110. Residues Gly115–Ala206 form an alpha-2 region. Cystine bridges form between Cys125–Cys188 and Cys227–Cys283. The interval Glu207–Trp298 is alpha-3. Positions Pro209–Arg297 constitute an Ig-like C1-type domain. The connecting peptide stretch occupies residues Glu299–Ile308. The chain crosses the membrane as a helical span at residues Val309–Cys333. Over Arg334–Ala366 the chain is Cytoplasmic.

The protein belongs to the MHC class I family. As to quaternary structure, heterodimer of an alpha chain and a beta chain (beta-2-microglobulin).

It is found in the membrane. In terms of biological role, involved in the presentation of foreign antigens to the immune system. This is Class I histocompatibility antigen, Gogo-C*0201 alpha chain from Gorilla gorilla gorilla (Western lowland gorilla).